The following is a 422-amino-acid chain: Testin (422 aa).

Residues 92-199 (MILTNPVPAK…GDVKLPGELE (108 aa)) enclose the PET domain. Residues 198–224 (LETKATDKNNVNSGDRSTSAAVGAMED) form a disordered region. Residues 205–217 (KNNVNSGDRSTSA) are compositionally biased toward polar residues. LIM zinc-binding domains lie at 234 to 297 (YSCY…CDSE), 299 to 359 (PRCA…KHAA), and 362 to 422 (QGCH…KMMS).

The protein belongs to the prickle / espinas / testin family.

It is found in the cytoplasm. Its subcellular location is the cell junction. It localises to the focal adhesion. Its function is as follows. Scaffold protein that may play a role in cell adhesion, cell spreading and in the reorganization of the actin cytoskeleton. May play a role in the regulation of cell proliferation. May inhibit cell growth. The polypeptide is Testin (TES) (Gallus gallus (Chicken)).